We begin with the raw amino-acid sequence, 298 residues long: uncharacterized protein (298 aa).

A run of 8 helical transmembrane segments spans residues 5–25, 52–72, 105–125, 138–158, 163–183, 208–228, 236–256, and 273–293; these read SLAT…FLLW, VISG…FLAL, LFLL…QVLV, IFWG…LLML, IQGG…NDIA, GLMG…PLLT, LLAG…MSAI, and GGLL…FYFI.

The protein belongs to the CDS family.

It localises to the cell membrane. This is an uncharacterized protein from Escherichia coli (strain K12).